Consider the following 216-residue polypeptide: GTP cyclohydrolase-2 (216 aa).

51–55 (RIHSE) contributes to the GTP binding site. 3 residues coordinate Zn(2+): Cys-56, Cys-67, and Cys-69. Residues Gln-72, 94–96 (EGR), and Thr-116 contribute to the GTP site. Catalysis depends on Asp-128, which acts as the Proton acceptor. Arg-130 acts as the Nucleophile in catalysis. GTP contacts are provided by Thr-151 and Lys-156.

It belongs to the GTP cyclohydrolase II family. Requires Zn(2+) as cofactor.

The enzyme catalyses GTP + 4 H2O = 2,5-diamino-6-hydroxy-4-(5-phosphoribosylamino)-pyrimidine + formate + 2 phosphate + 3 H(+). The protein operates within cofactor biosynthesis; riboflavin biosynthesis; 5-amino-6-(D-ribitylamino)uracil from GTP: step 1/4. Catalyzes the conversion of GTP to 2,5-diamino-6-ribosylamino-4(3H)-pyrimidinone 5'-phosphate (DARP), formate and pyrophosphate. The chain is GTP cyclohydrolase-2 from Haemophilus influenzae (strain 86-028NP).